Reading from the N-terminus, the 374-residue chain is DNA integrity scanning protein DisA (374 aa).

The region spanning 20–158 (DGLMRASLSA…DGMRRVLEDS (139 aa)) is the DAC domain. Residues Gly87, Leu105, and 118–122 (TRHRT) each bind ATP.

The protein belongs to the DisA family. Homooctamer. The cofactor is Mg(2+).

The enzyme catalyses 2 ATP = 3',3'-c-di-AMP + 2 diphosphate. In terms of biological role, participates in a DNA-damage check-point that is active prior to asymmetric division when DNA is damaged. DisA forms globular foci that rapidly scan along the chromosomes during sporulation, searching for lesions. When a lesion is present, DisA pauses at the lesion site. This triggers a cellular response that culminates in a temporary block in sporulation initiation. Functionally, also has diadenylate cyclase activity, catalyzing the condensation of 2 ATP molecules into cyclic di-AMP (c-di-AMP). c-di-AMP acts as a signaling molecule that couples DNA integrity with progression of sporulation. The rise in c-di-AMP level generated by DisA while scanning the chromosome, operates as a positive signal that advances sporulation; upon encountering a lesion, the DisA focus arrests at the damaged site and halts c-di-AMP synthesis. This chain is DNA integrity scanning protein DisA, found in Streptomyces avermitilis (strain ATCC 31267 / DSM 46492 / JCM 5070 / NBRC 14893 / NCIMB 12804 / NRRL 8165 / MA-4680).